Here is a 276-residue protein sequence, read N- to C-terminus: 4-chlorobenzoyl coenzyme A dehalogenase-1 (276 aa).

66–71 serves as a coordination point for substrate; sequence AGFDLE. The active-site Proton acceptor is the His93. Gly117 contributes to the substrate binding site. The active-site Nucleophile is Asp148. Substrate is bound at residue Arg261.

Belongs to the enoyl-CoA hydratase/isomerase family. As to quaternary structure, homotetramer.

It carries out the reaction 4-chlorobenzoyl-CoA + H2O = 4-hydroxybenzoyl-CoA + chloride + H(+). Its pathway is xenobiotic degradation; 4-chlorobenzoate degradation; 4-hydroxybenzoate from 4-chlorobenzoate: step 2/3. Functionally, dehalogenates 4-chlorobenzoyl-CoA, 4-iodobenzoyl-CoA, 4-bromobenzoyl-CoA and, at a slower rate, 4-fluorobenzoyl-CoA. Does not dehalogenate 2-chlorobenzoyl-CoA or 3-chlorobenzoyl-CoA. This Arthrobacter sp protein is 4-chlorobenzoyl coenzyme A dehalogenase-1.